Consider the following 408-residue polypeptide: Phosphoglycerate kinase (408 aa).

Residues 24-26 (DLN), R39, 62-65 (HLGR), R121, and R161 contribute to the substrate site. ATP-binding positions include K211, G307, E338, and 364-367 (GGDS).

It belongs to the phosphoglycerate kinase family. As to quaternary structure, monomer.

It is found in the cytoplasm. The catalysed reaction is (2R)-3-phosphoglycerate + ATP = (2R)-3-phospho-glyceroyl phosphate + ADP. Its pathway is carbohydrate degradation; glycolysis; pyruvate from D-glyceraldehyde 3-phosphate: step 2/5. The protein is Phosphoglycerate kinase of Pseudarthrobacter chlorophenolicus (strain ATCC 700700 / DSM 12829 / CIP 107037 / JCM 12360 / KCTC 9906 / NCIMB 13794 / A6) (Arthrobacter chlorophenolicus).